Consider the following 728-residue polypeptide: Catalase-peroxidase 2 (728 aa).

Positions 91-214 (WHAAGTYRTG…LAAVQMGLIY (124 aa)) form a cross-link, tryptophyl-tyrosyl-methioninium (Trp-Tyr) (with M-240). The active-site Proton acceptor is the H92. The segment at residues 214-240 (YVNPEGPNGNPDPAKAAVDIRETFARM) is a cross-link (tryptophyl-tyrosyl-methioninium (Tyr-Met) (with W-91)). H255 provides a ligand contact to heme b. Residues 338–362 (WKPNGDAGANSIPDPYDPSRRRGPT) form a disordered region.

Belongs to the peroxidase family. Peroxidase/catalase subfamily. As to quaternary structure, homodimer or homotetramer. It depends on heme b as a cofactor. In terms of processing, formation of the three residue Trp-Tyr-Met cross-link is important for the catalase, but not the peroxidase activity of the enzyme.

It catalyses the reaction H2O2 + AH2 = A + 2 H2O. The enzyme catalyses 2 H2O2 = O2 + 2 H2O. In terms of biological role, bifunctional enzyme with both catalase and broad-spectrum peroxidase activity. The protein is Catalase-peroxidase 2 of Cupriavidus pinatubonensis (strain JMP 134 / LMG 1197) (Cupriavidus necator (strain JMP 134)).